Reading from the N-terminus, the 88-residue chain is Co-chaperonin GroES (88 aa).

The protein belongs to the GroES chaperonin family. As to quaternary structure, heptamer of 7 subunits arranged in a ring. Interacts with the chaperonin GroEL.

It is found in the cytoplasm. Its function is as follows. Together with the chaperonin GroEL, plays an essential role in assisting protein folding. The GroEL-GroES system forms a nano-cage that allows encapsulation of the non-native substrate proteins and provides a physical environment optimized to promote and accelerate protein folding. GroES binds to the apical surface of the GroEL ring, thereby capping the opening of the GroEL channel. This Rubrobacter xylanophilus (strain DSM 9941 / JCM 11954 / NBRC 16129 / PRD-1) protein is Co-chaperonin GroES.